Here is a 445-residue protein sequence, read N- to C-terminus: C4-dicarboxylate transport protein 2 (445 aa).

Helical transmembrane passes span 24–44 (ILYVQVLIAILIGIVVGWLFP), 62–82 (LIKMVIAPIIFCTVVSGIAHI), 96–116 (LVYFEIVSTFALLLGLIVGNL), 163–183 (GDILQVLLFAILFGFALMALG), 201–221 (FGVIAIVMKAAPVGAFGAMAF), 237–257 (LIALFYITAGLFVVIVLGLIA), 334–354 (ALGVDLSFSQQVTILIVAMLT), and 366–386 (FITLAATLSVVNPALVPGMAI).

It belongs to the dicarboxylate/amino acid:cation symporter (DAACS) (TC 2.A.23) family.

Its subcellular location is the cell inner membrane. Its function is as follows. Responsible for the transport of dicarboxylates such as succinate, fumarate, and malate from the periplasm across the membrane. The protein is C4-dicarboxylate transport protein 2 of Bradyrhizobium sp. (strain ORS 278).